The chain runs to 226 residues: MAAAAQRLLAASTKIVGVGRNFVAHAKELGNPVPKEPVLFLKPTSSFLHAGVAGAAIEVPEPVESLHHEVELAVVISQRARDVPEASAMDFVGGYALALDMTARELQSAAKSAGLPWTLGKAQDTFTPISAVIPKSDVANPDDLELWLKVDDELRQKGSTSDMIFKIPSLISYISSIMTLMEGDVILTGTPEGVGPVRPGQKIKAGITGLIDVEFDVQKRKRSFST.

The transit peptide at 1–30 (MAAAAQRLLAASTKIVGVGRNFVAHAKELG) directs the protein to the mitochondrion. The Mg(2+) site is built by Glu-69, Glu-71, and Asp-100.

This sequence belongs to the FAH family. It depends on Mg(2+) as a cofactor. The cofactor is Mn(2+).

It is found in the mitochondrion. It catalyses the reaction oxaloacetate = enol-oxaloacetate. Its function is as follows. Tautomerase that converts enol-oxaloacetate, a strong inhibitor of succinate dehydrogenase, to the physiological keto form of oxaloacetate. This is Oxaloacetate tautomerase FAHD2, mitochondrial from Oryza sativa subsp. japonica (Rice).